The primary structure comprises 564 residues: NAD-dependent malic enzyme (564 aa).

Catalysis depends on Tyr104, which acts as the Proton donor. Arg157 provides a ligand contact to NAD(+). Lys175 acts as the Proton acceptor in catalysis. Positions 246, 247, and 270 each coordinate a divalent metal cation. NAD(+) is bound by residues Asp270 and Asn417.

It belongs to the malic enzymes family. Homotetramer. The cofactor is Mg(2+). Requires Mn(2+) as cofactor.

The enzyme catalyses (S)-malate + NAD(+) = pyruvate + CO2 + NADH. It carries out the reaction oxaloacetate + H(+) = pyruvate + CO2. In Aeromonas hydrophila subsp. hydrophila (strain ATCC 7966 / DSM 30187 / BCRC 13018 / CCUG 14551 / JCM 1027 / KCTC 2358 / NCIMB 9240 / NCTC 8049), this protein is NAD-dependent malic enzyme.